Consider the following 499-residue polypeptide: UDP-N-acetylmuramoylalanine--D-glutamate ligase (499 aa).

128-134 (GTNGKTT) contributes to the ATP binding site.

Belongs to the MurCDEF family.

It is found in the cytoplasm. It carries out the reaction UDP-N-acetyl-alpha-D-muramoyl-L-alanine + D-glutamate + ATP = UDP-N-acetyl-alpha-D-muramoyl-L-alanyl-D-glutamate + ADP + phosphate + H(+). The protein operates within cell wall biogenesis; peptidoglycan biosynthesis. Cell wall formation. Catalyzes the addition of glutamate to the nucleotide precursor UDP-N-acetylmuramoyl-L-alanine (UMA). This chain is UDP-N-acetylmuramoylalanine--D-glutamate ligase, found in Rhodococcus jostii (strain RHA1).